A 392-amino-acid polypeptide reads, in one-letter code: Meiotically up-regulated gene 11 protein (392 aa).

The protein resides in the cytoplasm. It localises to the nucleus. Its function is as follows. Has a role in meiosis. The chain is Meiotically up-regulated gene 11 protein (mug11) from Schizosaccharomyces pombe (strain 972 / ATCC 24843) (Fission yeast).